A 567-amino-acid chain; its full sequence is Membrane protein insertase YidC (567 aa).

Residues 3-23 traverse the membrane as a helical segment; sequence IQRIVLFAGLAIVSYLMVLAW. Positions 32–80 are disordered; that stretch reads TEQVAEAQSSSDSSATNSTDDMILPEDNNAGGEEFATPETGSLASTSAN. Low complexity predominate over residues 40-52; sequence SSSDSSATNSTDD. The segment covering 70-80 has biased composition (polar residues); the sequence is ETGSLASTSAN. A run of 5 helical transmembrane segments spans residues 354-374, 378-398, 445-465, 485-505, and 522-542; these read FGWL…FYGL, WGVA…HLSA, GGCL…WVLF, MDPY…QMSL, and PLIF…YWLV.

The protein belongs to the OXA1/ALB3/YidC family. Type 1 subfamily. As to quaternary structure, interacts with the Sec translocase complex via SecD. Specifically interacts with transmembrane segments of nascent integral membrane proteins during membrane integration.

It localises to the cell inner membrane. Functionally, required for the insertion and/or proper folding and/or complex formation of integral membrane proteins into the membrane. Involved in integration of membrane proteins that insert both dependently and independently of the Sec translocase complex, as well as at least some lipoproteins. Aids folding of multispanning membrane proteins. The sequence is that of Membrane protein insertase YidC from Marinobacter nauticus (strain ATCC 700491 / DSM 11845 / VT8) (Marinobacter aquaeolei).